A 435-amino-acid chain; its full sequence is Shikimate O-hydroxycinnamoyltransferase (435 aa).

Active-site proton acceptor residues include H153 and D382.

Belongs to the plant acyltransferase family. In terms of tissue distribution, highly expressed in stem vascular tissues.

It carries out the reaction shikimate + 4-coumaroyl-CoA = trans-4-coumaroylshikimate + CoA. Acyltransferase involved in the biosynthesis of lignin. The affinity for shikimate as acceptor is 100-fold higher than for quinate. The most efficient donors are caffeoyl-CoA &gt; p-coumaroyl-CoA &gt; feruloyl-CoA &gt;&gt; sinapoyl-CoA. The polypeptide is Shikimate O-hydroxycinnamoyltransferase (HST) (Nicotiana tabacum (Common tobacco)).